The following is a 61-amino-acid chain: Opistoporin-4 (61 aa).

A propeptide spanning residues 45-61 (EAGQMPFDEFMDILHYY) is cleaved from the precursor.

It belongs to the non-disulfide-bridged peptide (NDBP) superfamily. Long chain multifunctional peptide (group 2) family. As to expression, expressed by the venom gland.

It localises to the secreted. It is found in the target cell membrane. At high concentrations, acts as a pore former in cellular membranes and causes the leakage of the cells. At submicromolar concentrations, degranulates granulocytes and has a weak hemolytic activity against human erythrocytes. Also strongly inhibits the production of superoxide anions. Has a strong antibacterial activity against Gram-negative bacteria but is less active against Gram-positive bacteria. Also has antifungal activity. This Opistophthalmus carinatus (African yellow leg scorpion) protein is Opistoporin-4.